Reading from the N-terminus, the 151-residue chain is Large ribosomal subunit protein bL9 (151 aa).

Belongs to the bacterial ribosomal protein bL9 family.

Binds to the 23S rRNA. The polypeptide is Large ribosomal subunit protein bL9 (Desulfotalea psychrophila (strain LSv54 / DSM 12343)).